The following is a 312-amino-acid chain: Ribosomal RNA small subunit methyltransferase H (312 aa).

S-adenosyl-L-methionine is bound by residues 34-36 (AGH), aspartate 54, phenylalanine 81, aspartate 102, and glutamine 109.

Belongs to the methyltransferase superfamily. RsmH family.

Its subcellular location is the cytoplasm. It carries out the reaction cytidine(1402) in 16S rRNA + S-adenosyl-L-methionine = N(4)-methylcytidine(1402) in 16S rRNA + S-adenosyl-L-homocysteine + H(+). Functionally, specifically methylates the N4 position of cytidine in position 1402 (C1402) of 16S rRNA. In Citrifermentans bemidjiense (strain ATCC BAA-1014 / DSM 16622 / JCM 12645 / Bem) (Geobacter bemidjiensis), this protein is Ribosomal RNA small subunit methyltransferase H.